A 578-amino-acid polypeptide reads, in one-letter code: Poly(A) RNA polymerase cid13 (578 aa).

Mg(2+) contacts are provided by Asp110 and Asp112. Positions 275-330 (SLGILFVEFFRFFGYLFDYEHFVLSIRHGTFLSKRAKGWQFQLNNFLCVEEPFHTS) constitute a PAP-associated domain. A disordered region spans residues 495 to 565 (SHHFDERHGG…SEVVSPVSLH (71 aa)). Over residues 496–510 (HHFDERHGGDRHEKN) the composition is skewed to basic and acidic residues. The segment covering 516–527 (RYSRNKFHKKKQ) has biased composition (basic residues). Residues 547–565 (NSPPSNSSSSEVVSPVSLH) are compositionally biased toward low complexity.

This sequence belongs to the DNA polymerase type-B-like family. In terms of assembly, interacts with pab1. It depends on Mg(2+) as a cofactor. Mn(2+) serves as cofactor.

The protein localises to the cytoplasm. It localises to the nucleus. It carries out the reaction RNA(n) + ATP = RNA(n)-3'-adenine ribonucleotide + diphosphate. Polymerase that creates the 3' poly(A) tail of suc22 mRNA. The chain is Poly(A) RNA polymerase cid13 (cid13) from Schizosaccharomyces pombe (strain 972 / ATCC 24843) (Fission yeast).